The sequence spans 403 residues: Tyrosine--tRNA ligase (403 aa).

Residues 42–51 carry the 'HIGH' region motif; that stretch reads PTAPDLHLGH. The 'KMSKS' region motif lies at 226 to 230; it reads KMSKS. K229 is a binding site for ATP. The S4 RNA-binding domain maps to 336 to 396; the sequence is MPISAVLNKA…GKKAFGRITL (61 aa).

The protein belongs to the class-I aminoacyl-tRNA synthetase family. TyrS type 2 subfamily. In terms of assembly, homodimer.

It is found in the cytoplasm. It catalyses the reaction tRNA(Tyr) + L-tyrosine + ATP = L-tyrosyl-tRNA(Tyr) + AMP + diphosphate + H(+). In terms of biological role, catalyzes the attachment of tyrosine to tRNA(Tyr) in a two-step reaction: tyrosine is first activated by ATP to form Tyr-AMP and then transferred to the acceptor end of tRNA(Tyr). This chain is Tyrosine--tRNA ligase, found in Pseudomonas syringae pv. tomato (strain ATCC BAA-871 / DC3000).